The primary structure comprises 319 residues: Probable cytochrome c oxidase subunit 2 (319 aa).

The signal sequence occupies residues 1 to 33; that stretch reads MSPNGSDRSPRRPMRRKLLQALTAGLVLATATG. 2 helical membrane passes run 63-83 and 101-121; these read WAAA…ATIF and MPIE…LFYF. The Cu cation site is built by His-227, Cys-262, Cys-266, and His-270.

This sequence belongs to the cytochrome c oxidase subunit 2 family. The cofactor is Cu cation. Requires heme as cofactor.

The protein localises to the cell membrane. The catalysed reaction is 4 Fe(II)-[cytochrome c] + O2 + 8 H(+)(in) = 4 Fe(III)-[cytochrome c] + 2 H2O + 4 H(+)(out). Functionally, subunits I and II form the functional core of the enzyme complex. Electrons originating in cytochrome c are transferred via heme a and Cu(A) to the binuclear center formed by heme a3 and Cu(B). The polypeptide is Probable cytochrome c oxidase subunit 2 (ctaC) (Streptomyces avermitilis (strain ATCC 31267 / DSM 46492 / JCM 5070 / NBRC 14893 / NCIMB 12804 / NRRL 8165 / MA-4680)).